Here is a 210-residue protein sequence, read N- to C-terminus: Redox-sensing transcriptional repressor Rex (210 aa).

Residues S17–T56 constitute a DNA-binding region (H-T-H motif). G91–G96 contacts NAD(+).

Belongs to the transcriptional regulatory Rex family. As to quaternary structure, homodimer.

The protein localises to the cytoplasm. Its function is as follows. Modulates transcription in response to changes in cellular NADH/NAD(+) redox state. This is Redox-sensing transcriptional repressor Rex from Treponema denticola (strain ATCC 35405 / DSM 14222 / CIP 103919 / JCM 8153 / KCTC 15104).